The primary structure comprises 239 residues: MQILPAIDIKDGQAVRLFKGDFNQKTVVNPDIIEQAKTFKNAGIQFIHLVDLDGTLDGRATNRDLITEVKKISGLGIEVGGGIRTLEQIRDYLAVGIDRIIIGSMAVKDPDFVRAALEEFGADRIVVGIDAKAGLVATEGWLETSNVDYITLAKEMEKMGVTLFIYTDVDRDGTLTGPNLDHYKCLVSELTTAKVIASGGVAELADLNHLQEIGVAGTIVGKAYYNGNITLDQLKSFGG.

The Proton acceptor role is filled by Asp8. The active-site Proton donor is the Asp130.

Belongs to the HisA/HisF family.

It localises to the cytoplasm. The catalysed reaction is 1-(5-phospho-beta-D-ribosyl)-5-[(5-phospho-beta-D-ribosylamino)methylideneamino]imidazole-4-carboxamide = 5-[(5-phospho-1-deoxy-D-ribulos-1-ylimino)methylamino]-1-(5-phospho-beta-D-ribosyl)imidazole-4-carboxamide. It participates in amino-acid biosynthesis; L-histidine biosynthesis; L-histidine from 5-phospho-alpha-D-ribose 1-diphosphate: step 4/9. This chain is 1-(5-phosphoribosyl)-5-[(5-phosphoribosylamino)methylideneamino] imidazole-4-carboxamide isomerase, found in Streptococcus thermophilus (strain ATCC BAA-491 / LMD-9).